The following is a 323-amino-acid chain: Acetyl-coenzyme A carboxylase carboxyl transferase subunit alpha (323 aa).

The CoA carboxyltransferase C-terminal domain maps to 39 to 293 (RLSKKSQQLT…RRALGDSLRQ (255 aa)).

This sequence belongs to the AccA family. Acetyl-CoA carboxylase is a heterohexamer composed of biotin carboxyl carrier protein (AccB), biotin carboxylase (AccC) and two subunits each of ACCase subunit alpha (AccA) and ACCase subunit beta (AccD).

It is found in the cytoplasm. It carries out the reaction N(6)-carboxybiotinyl-L-lysyl-[protein] + acetyl-CoA = N(6)-biotinyl-L-lysyl-[protein] + malonyl-CoA. It functions in the pathway lipid metabolism; malonyl-CoA biosynthesis; malonyl-CoA from acetyl-CoA: step 1/1. Its function is as follows. Component of the acetyl coenzyme A carboxylase (ACC) complex. First, biotin carboxylase catalyzes the carboxylation of biotin on its carrier protein (BCCP) and then the CO(2) group is transferred by the carboxyltransferase to acetyl-CoA to form malonyl-CoA. The protein is Acetyl-coenzyme A carboxylase carboxyl transferase subunit alpha of Burkholderia pseudomallei (strain 1106a).